The primary structure comprises 319 residues: Acetyl-coenzyme A carboxylase carboxyl transferase subunit alpha (319 aa).

The 262-residue stretch at 32-293 folds into the CoA carboxyltransferase C-terminal domain; sequence NVETEVRALR…KAVLLNELDA (262 aa).

It belongs to the AccA family. Acetyl-CoA carboxylase is a heterohexamer composed of biotin carboxyl carrier protein (AccB), biotin carboxylase (AccC) and two subunits each of ACCase subunit alpha (AccA) and ACCase subunit beta (AccD).

The protein resides in the cytoplasm. The enzyme catalyses N(6)-carboxybiotinyl-L-lysyl-[protein] + acetyl-CoA = N(6)-biotinyl-L-lysyl-[protein] + malonyl-CoA. It functions in the pathway lipid metabolism; malonyl-CoA biosynthesis; malonyl-CoA from acetyl-CoA: step 1/1. Its function is as follows. Component of the acetyl coenzyme A carboxylase (ACC) complex. First, biotin carboxylase catalyzes the carboxylation of biotin on its carrier protein (BCCP) and then the CO(2) group is transferred by the carboxyltransferase to acetyl-CoA to form malonyl-CoA. The polypeptide is Acetyl-coenzyme A carboxylase carboxyl transferase subunit alpha (Xanthomonas oryzae pv. oryzae (strain MAFF 311018)).